Here is a 360-residue protein sequence, read N- to C-terminus: G-protein coupled receptor 15 (360 aa).

The Extracellular portion of the chain corresponds to 1-33 (MEPATALLIVDYYDYTSPDPPFLETPSHLSYTS). The helical transmembrane segment at 34–54 (VFLPIFYTVVFLTGVVGNFIL) threads the bilayer. At 55-69 (MIALHFKRGNRRLID) the chain is on the cytoplasmic side. The helical transmembrane segment at 70 to 90 (IFIINLAASDFIFLVTVPLWM) threads the bilayer. The Extracellular portion of the chain corresponds to 91–120 (DKEASLGLWRTGSFLCKGSSYVISVNMHCS). A helical membrane pass occupies residues 121–141 (VFLLTCMSMDRYLAIMHPALA). The Cytoplasmic segment spans residues 142–149 (KRLRRRSS). Residues 150 to 170 (AYAVCAVVWIISCVLGLPTLL) traverse the membrane as a helical segment. The Extracellular segment spans residues 171-192 (SRELTHIEGKPYCAEKKPTSLK). The chain crosses the membrane as a helical span at residues 193-213 (LMWGLVALITTFFVPLLSIVT). Residues 214–239 (CYCCITRRLCAHYQQSGKHNKKLKKS) are Cytoplasmic-facing. The chain crosses the membrane as a helical span at residues 240–260 (IKIVIIAVAAFTVSWVPFNTF). The Extracellular segment spans residues 261 to 284 (KLLAIVSGFQPEGLFHSEALQLAM). Residues 285–305 (NVTGPLAFASSCVNPLIYYVF) traverse the membrane as a helical segment. Residues 306-360 (DSYIRRAIVRCLCPCLKTHNFGSSTETSDSHLTKALSNFIHAEDFIRRRKRSVSL) lie on the Cytoplasmic side of the membrane. Residue Ser359 is modified to Phosphoserine.

The protein belongs to the G-protein coupled receptor 1 family. In terms of assembly, interacts with adapter YWHAE; this interaction promotes ER-to-Golgi transport of GPR15. Post-translationally, phosphorylation is necessary for YWHAE binding and efficient surface expression. O-glycosylated. Sialylated O-glycans in the N-terminal tail inhibits binding of GPR15LG. In terms of processing, sulfation is required for efficient binding of GPR15LG. Highly expressed in gut tissues and lymphoid organs, largely restricted to TCRbeta+ cells. Expressed in fetal thymic dendritic epidermal T-cell precursors.

It localises to the cell membrane. Its function is as follows. G protein-coupled receptor that plays an important role in immune homeostasis. Acts via its natural ligand GPR15LG, a chemokine-like polypeptide strongly expressed in gastrointestinal tissues. GPR15-GPR15LG signaling axis regulates intestinal homeostasis and inflammation through the migration of immune cells. Controls thereby the specific homing of T-cells, particularly FOXP3+ regulatory T-cells (Tregs), to the large intestine lamina propria. Also required for skin localization of thymus-derived dendritic epidermal T-cells. Plays an important role in mediating cytoprotective function as well as angiogenesis of thrombomodulin. Mechanistically, preferentially signals through the Gi/o pathway to inhibit adenylate cyclase activity and activate a phosphatidylinositol-calcium second messenger system that regulates the release of Ca(2+) ions from intracellular stores. The sequence is that of G-protein coupled receptor 15 (Gpr15) from Mus musculus (Mouse).